We begin with the raw amino-acid sequence, 678 residues long: Glycine--tRNA ligase beta subunit (678 aa).

The protein belongs to the class-II aminoacyl-tRNA synthetase family. As to quaternary structure, tetramer of two alpha and two beta subunits.

It localises to the cytoplasm. It carries out the reaction tRNA(Gly) + glycine + ATP = glycyl-tRNA(Gly) + AMP + diphosphate. In Streptococcus pneumoniae (strain ATCC BAA-255 / R6), this protein is Glycine--tRNA ligase beta subunit.